We begin with the raw amino-acid sequence, 89 residues long: UPF0297 protein SMU_2079c (89 aa).

It belongs to the UPF0297 family.

This chain is UPF0297 protein SMU_2079c, found in Streptococcus mutans serotype c (strain ATCC 700610 / UA159).